We begin with the raw amino-acid sequence, 147 residues long: Heavy metal-dependent transcription regulator 1 (147 aa).

Residues 1–70 enclose the HTH merR-type domain; sequence MNIGQASKVV…VEQIKDLLAL (70 aa). Positions 3 to 22 form a DNA-binding region, H-T-H motif; that stretch reads IGQASKVVSGVSSKMIRYYE.

The protein resides in the cytoplasm. In terms of biological role, transcriptional regulator involved in acid tolerance. Binds copper. The chain is Heavy metal-dependent transcription regulator 1 (hmrR1) from Rhizobium meliloti (strain 1021) (Ensifer meliloti).